Here is a 326-residue protein sequence, read N- to C-terminus: Glyoxylate/hydroxypyruvate reductase B (326 aa).

Active-site residues include Arg-237 and Glu-266. His-285 (proton donor) is an active-site residue.

This sequence belongs to the D-isomer specific 2-hydroxyacid dehydrogenase family. GhrB subfamily. Homodimer.

It is found in the cytoplasm. The enzyme catalyses glycolate + NADP(+) = glyoxylate + NADPH + H(+). It catalyses the reaction (R)-glycerate + NAD(+) = 3-hydroxypyruvate + NADH + H(+). It carries out the reaction (R)-glycerate + NADP(+) = 3-hydroxypyruvate + NADPH + H(+). In terms of biological role, catalyzes the NADPH-dependent reduction of glyoxylate and hydroxypyruvate into glycolate and glycerate, respectively. The chain is Glyoxylate/hydroxypyruvate reductase B from Yersinia enterocolitica serotype O:8 / biotype 1B (strain NCTC 13174 / 8081).